A 331-amino-acid chain; its full sequence is Holliday junction branch migration complex subunit RuvB (331 aa).

Positions 1–186 are large ATPase domain (RuvB-L); that stretch reads MAKTMMQDRL…FGIVQRLEFY (186 aa). ATP-binding positions include I25, R26, G67, K70, T71, T72, 133-135, R176, Y186, and R223; that span reads EDF. T71 is a binding site for Mg(2+). Positions 187 to 257 are small ATPAse domain (RuvB-S); the sequence is NIADLTTIVS…IAGSALDMLA (71 aa). Residues 260–331 form a head domain (RuvB-H) region; that stretch reads RRGLDHLDRR…LTQMAIDQMV (72 aa). 3 residues coordinate DNA: R296, R315, and R320.

It belongs to the RuvB family. In terms of assembly, homohexamer. Forms an RuvA(8)-RuvB(12)-Holliday junction (HJ) complex. HJ DNA is sandwiched between 2 RuvA tetramers; dsDNA enters through RuvA and exits via RuvB. An RuvB hexamer assembles on each DNA strand where it exits the tetramer. Each RuvB hexamer is contacted by two RuvA subunits (via domain III) on 2 adjacent RuvB subunits; this complex drives branch migration. In the full resolvosome a probable DNA-RuvA(4)-RuvB(12)-RuvC(2) complex forms which resolves the HJ.

It localises to the cytoplasm. It catalyses the reaction ATP + H2O = ADP + phosphate + H(+). The RuvA-RuvB-RuvC complex processes Holliday junction (HJ) DNA during genetic recombination and DNA repair, while the RuvA-RuvB complex plays an important role in the rescue of blocked DNA replication forks via replication fork reversal (RFR). RuvA specifically binds to HJ cruciform DNA, conferring on it an open structure. The RuvB hexamer acts as an ATP-dependent pump, pulling dsDNA into and through the RuvAB complex. RuvB forms 2 homohexamers on either side of HJ DNA bound by 1 or 2 RuvA tetramers; 4 subunits per hexamer contact DNA at a time. Coordinated motions by a converter formed by DNA-disengaged RuvB subunits stimulates ATP hydrolysis and nucleotide exchange. Immobilization of the converter enables RuvB to convert the ATP-contained energy into a lever motion, pulling 2 nucleotides of DNA out of the RuvA tetramer per ATP hydrolyzed, thus driving DNA branch migration. The RuvB motors rotate together with the DNA substrate, which together with the progressing nucleotide cycle form the mechanistic basis for DNA recombination by continuous HJ branch migration. Branch migration allows RuvC to scan DNA until it finds its consensus sequence, where it cleaves and resolves cruciform DNA. The polypeptide is Holliday junction branch migration complex subunit RuvB (Psychrobacter arcticus (strain DSM 17307 / VKM B-2377 / 273-4)).